The chain runs to 1590 residues: Pentafunctional AROM polypeptide (1590 aa).

The 3-dehydroquinate synthase stretch occupies residues 1–387; it reads MGSTTFENPT…YEPKASVVED (387 aa). Residues 49–51, 86–89, 117–119, and aspartate 122 each bind NAD(+); these read DTN, ENSK, and GGV. Arginine 133 contributes to the 7-phospho-2-dehydro-3-deoxy-D-arabino-heptonate binding site. 142 to 143 contributes to the NAD(+) binding site; the sequence is TT. Residues aspartate 149 and lysine 155 each coordinate 7-phospho-2-dehydro-3-deoxy-D-arabino-heptonate. Lysine 164 is an NAD(+) binding site. Asparagine 165 is a 7-phospho-2-dehydro-3-deoxy-D-arabino-heptonate binding site. NAD(+) contacts are provided by residues 182 to 185 and asparagine 193; that span reads FLET. Glutamate 197 serves as a coordination point for Zn(2+). 7-phospho-2-dehydro-3-deoxy-D-arabino-heptonate contacts are provided by residues 197-200 and lysine 253; that span reads EVVK. Glutamate 263 acts as the Proton acceptor; for 3-dehydroquinate synthase activity in catalysis. 7-phospho-2-dehydro-3-deoxy-D-arabino-heptonate is bound by residues 267–271 and histidine 274; that span reads RNILN. Histidine 274 contacts Zn(2+). Histidine 278 (proton acceptor; for 3-dehydroquinate synthase activity) is an active-site residue. 7-phospho-2-dehydro-3-deoxy-D-arabino-heptonate is bound by residues histidine 290 and lysine 359. Zn(2+) is bound at residue histidine 290. The interval 400-841 is EPSP synthase; it reads VRPSVPETLN…WDILSKSFQV (442 aa). Cysteine 823 acts as the For EPSP synthase activity in catalysis. The interval 863–1055 is shikimate kinase; sequence DKSIFIIGMR…RNKPQSFFVS (193 aa). ATP is bound at residue 870–877; it reads GMRGAGKT. A 3-dehydroquinase region spans residues 1056 to 1276; sequence LTMPDISGAA…AAPGQLSAAE (221 aa). Catalysis depends on histidine 1179, which acts as the Proton acceptor; for 3-dehydroquinate dehydratase activity. Lysine 1207 functions as the Schiff-base intermediate with substrate; for 3-dehydroquinate dehydratase activity in the catalytic mechanism. Residues 1289–1590 are shikimate dehydrogenase; sequence PKSFYLFGTP…KMDKHPTFVC (302 aa).

In the N-terminal section; belongs to the sugar phosphate cyclases superfamily. Dehydroquinate synthase family. It in the 2nd section; belongs to the EPSP synthase family. This sequence in the 3rd section; belongs to the shikimate kinase family. The protein in the 4th section; belongs to the type-I 3-dehydroquinase family. In the C-terminal section; belongs to the shikimate dehydrogenase family. In terms of assembly, homodimer. Zn(2+) is required as a cofactor.

It is found in the cytoplasm. The catalysed reaction is 7-phospho-2-dehydro-3-deoxy-D-arabino-heptonate = 3-dehydroquinate + phosphate. The enzyme catalyses 3-dehydroquinate = 3-dehydroshikimate + H2O. It catalyses the reaction shikimate + NADP(+) = 3-dehydroshikimate + NADPH + H(+). It carries out the reaction shikimate + ATP = 3-phosphoshikimate + ADP + H(+). The catalysed reaction is 3-phosphoshikimate + phosphoenolpyruvate = 5-O-(1-carboxyvinyl)-3-phosphoshikimate + phosphate. The protein operates within metabolic intermediate biosynthesis; chorismate biosynthesis; chorismate from D-erythrose 4-phosphate and phosphoenolpyruvate: step 2/7. It functions in the pathway metabolic intermediate biosynthesis; chorismate biosynthesis; chorismate from D-erythrose 4-phosphate and phosphoenolpyruvate: step 3/7. Its pathway is metabolic intermediate biosynthesis; chorismate biosynthesis; chorismate from D-erythrose 4-phosphate and phosphoenolpyruvate: step 4/7. It participates in metabolic intermediate biosynthesis; chorismate biosynthesis; chorismate from D-erythrose 4-phosphate and phosphoenolpyruvate: step 5/7. The protein operates within metabolic intermediate biosynthesis; chorismate biosynthesis; chorismate from D-erythrose 4-phosphate and phosphoenolpyruvate: step 6/7. The AROM polypeptide catalyzes 5 consecutive enzymatic reactions in prechorismate polyaromatic amino acid biosynthesis. This is Pentafunctional AROM polypeptide from Sclerotinia sclerotiorum (White mold).